The following is a 386-amino-acid chain: Innexin unc-9 (386 aa).

Helical transmembrane passes span 33-53, 103-123, 197-217, and 282-302; these read TAIITVFAILVSAKQYVGFPI, QWVPFVLALEALLFYVPTIVW, FLYISVKILYTVNIVGQIFLL, and IFLFLWFWYFLLAGATLCSLF.

Belongs to the pannexin family. As to quaternary structure, heterooligomer of unc-7 and unc-9. Interacts with F-actin. As to expression, expressed in PLM neurons (at protein level). Expressed in the nerve ring.

The protein resides in the cell membrane. It localises to the cell junction. The protein localises to the gap junction. Structural component of gap junctions. Plays a role in maintaining gap junction activity to promote locomotion. In Caenorhabditis elegans, this protein is Innexin unc-9.